Consider the following 84-residue polypeptide: Beta-defensin 119 (84 aa).

A signal peptide spans 1–21; that stretch reads MKFLFLFLAILLATEVPVISG. 3 disulfides stabilise this stretch: Cys28–Cys55, Cys35–Cys49, and Cys39–Cys56.

This sequence belongs to the beta-defensin family. In terms of tissue distribution, abundant expression in the male reproductive tract only. Expressed abundantly in testis, while expression in epididymis decreased gradually from caput to cauda.

The protein localises to the secreted. Its function is as follows. Has antibacterial activity. The protein is Beta-defensin 119 (DEFB119) of Macaca mulatta (Rhesus macaque).